The chain runs to 83 residues: UPF0457 protein YnzG (83 aa).

This sequence belongs to the UPF0457 family.

The protein is UPF0457 protein YnzG (ynzG) of Bacillus subtilis (strain 168).